The primary structure comprises 405 residues: Prenyltransferase phqA (405 aa).

Positions 195, 262, and 332 each coordinate dimethylallyl diphosphate.

It belongs to the tryptophan dimethylallyltransferase family.

The protein operates within alkaloid biosynthesis. Its function is as follows. Prenyltransferase; part of the gene cluster that mediates the biosynthesis of paraherquamide, a fungal indole alkaloid that belongs to a family of natural products containing a characteristic bicyclo[2.2.2]diazaoctane core. The first steps in the biosynthesis of paraherquamide is the production of the beta-methyl-proline precursor from L-isoleucine. They require oxidation of a terminally hydroxylated L-isoleucine to the corresponding aldehyde by enzymes which have still to be identified. Spontaneous cyclization and dehydration would yield the 4-methyl pyrolline-5-carboxylic acid, which is then reduced by the pyrroline-5-carboxylate reductase phqD leading to the beta-methyl-proline precursor. The next step of paraherquamide biosynthesis involves coupling of beta-methyl-proline and L-tryptophan by the bimodular NRPS phqB, to produce a monooxopiperazine intermediate. The reductase (R) domain of phqB utilizes NADPH for hydride transfer to reduce the thioester bond of the T domain-tethered linear dipeptide to a hemithioaminal intermediate, which spontaneously cleaves the C-S bond to release the aldehyde product. This compound undergoes spontaneous cyclization and dehydration to give a dienamine which is reverse prenylated at C-2 by the reverse prenyltransferase phqJ. The other prenyltransferase present in the cluster, phqI may be a redundant gene in the pathway. During biosynthetic assembly, the key step to produce the polycyclic core is catalyzed by the bifunctional reductase and intramolecular [4+2] Diels-Alderase, phqE, resulting in formation of the [2.2.2] diazaoctane intermediate preparaherquamide. Following formation of preparaherquamide, an indole 2,3-epoxidation-initiated pinacol-like rearrangement is catalyzed by the phqK FAD-dependent monooxygenase. The prenyltransferase phqA, the cytochrome P450 monooxygenase phqL, and the FAD-linked oxidoreductase phqH (or the cytochrome P450 monooxygenase phqM), are proposed to be involved in the formation of the pyran ring. The FAD-dependent monooxygenase phqK is likely responsible for generation of the spiro-oxindole, and the N-methylation is likely mediated by the phqN methyltransferase leading to the isolable natural product paraherquamide F. However, the order of these biosynthetic steps has still to be determined. In late-stage paraherquamide biosynthesis, the third P450 monooxygenase, phqO, is probably responsible for the C-14 hydroxylation, transforming paraherquamide F to paraherquamide G, and paraherquamide E to the final product paraherquamide A. The expansion from the 6-membered ring pyran (in paraherquamides F and G) to the 7-membered dioxepin ring (in paraherquamides A and E) represents a poorly understood but intriguing process that probably involves the 2-oxoglutarate-dependent dioxygenase phqC. Finally, the remaining members of the paraherquamide cluster, including phqI as well as phqM (or phqH), do not have a clearly prescribed role and appear to be redundant. The polypeptide is Prenyltransferase phqA (Penicillium fellutanum).